Reading from the N-terminus, the 261-residue chain is Cytosolic Fe-S cluster assembly factor Nubp2 homolog (261 aa).

14-21 is a binding site for ATP; that stretch reads GKGGVGKS. Cys188 and Cys191 together coordinate [4Fe-4S] cluster.

This sequence belongs to the Mrp/NBP35 ATP-binding proteins family. NUBP2/CFD1 subfamily. In terms of assembly, heterotetramer of 2 Nubp1 and 2 Nubp2 chains. [4Fe-4S] cluster is required as a cofactor.

It is found in the cytoplasm. Its function is as follows. Component of the cytosolic iron-sulfur (Fe/S) protein assembly (CIA) machinery. Required for maturation of extramitochondrial Fe-S proteins. The Nubp1-Nubp2 heterotetramer forms a Fe-S scaffold complex, mediating the de novo assembly of an Fe-S cluster and its transfer to target apoproteins. This chain is Cytosolic Fe-S cluster assembly factor Nubp2 homolog, found in Drosophila ananassae (Fruit fly).